The sequence spans 300 residues: Sodium/potassium/calcium exchanger 1 (300 aa).

Residues 1–251 (DPGSQGVGAE…ENEQPLSLEW (251 aa)) are disordered. Acidic residues-rich tracts occupy residues 92–102 (GEVEGDEDEGE), 109–119 (GEVEGDEDEGE), 126–136 (GEVEGDEDEGE), 158–175 (GEVE…DEGE), and 215–244 (GDSE…EENE). The chain crosses the membrane as a helical span at residues 259 to 275 (AIYLFLLPIVFPLWLTV).

It belongs to the Ca(2+):cation antiporter (CaCA) (TC 2.A.19) family. SLC24A subfamily. In terms of processing, the uncleaved signal sequence is required for efficient membrane targeting and proper membrane integration and topology.

The protein localises to the cell membrane. It carries out the reaction Ca(2+)(out) + K(+)(out) + 4 Na(+)(in) = Ca(2+)(in) + K(+)(in) + 4 Na(+)(out). Its function is as follows. Calcium, potassium:sodium antiporter that transports 1 Ca(2+) and 1 K(+) in exchange for 4 Na(+). Critical component of the visual transduction cascade, controlling the calcium concentration of outer segments during light and darkness. Light causes a rapid lowering of cytosolic free calcium in the outer segment of both retinal rod and cone photoreceptors and the light-induced lowering of calcium is caused by extrusion via this protein which plays a key role in the process of light adaptation. The protein is Sodium/potassium/calcium exchanger 1 (SLC24A1) of Bison bison (American bison).